The chain runs to 305 residues: Hepatitis A virus cellular receptor 1 homolog (305 aa).

Positions 1 to 21 are cleaved as a signal peptide; it reads MNQIQVFISGLILLLPGAVDS. Residues 22 to 122 enclose the Ig-like V-type domain; that stretch reads YVEVKGVVGH…PGWFNDQKVT (101 aa). Residues 22–237 lie on the Extracellular side of the membrane; sequence YVEVKGVVGH…GKPQKNPTKG (216 aa). 3 disulfide bridges follow: Cys-37–Cys-108, Cys-49–Cys-60, and Cys-55–Cys-107. The tract at residues 129–185 is disordered; sequence PEIPTRPPTRPTTTRPTATGRPTTISTRSTHVPTSIRVSTSTPPTSTHTWTHKPEPT. Low complexity-rich tracts occupy residues 139 to 152 and 161 to 177; these read PTTT…RPTT and PTSI…STHT. The N-linked (GlcNAc...) asparagine glycan is linked to Asn-208. Residues 238–258 traverse the membrane as a helical segment; it reads FYVGICIAALLLLLLVSTVAI. Residues 259-305 are Cytoplasmic-facing; the sequence is TRYILMKRKSASLSVVAFRVSKIEALQNAAVVHSRAEDNIYIVEDRP.

It belongs to the immunoglobulin superfamily. TIM family. As to quaternary structure, interacts with STAM. Interacts with SELPLG. As to expression, expressed by stimulated T-cells. Expressed during primary antigen stimulation. Expressed at higher levels on B rather than T-cells, both constitutively and after activation.

The protein resides in the cell membrane. Phosphatidylserine receptor that plays an important functional role in regulatory B-cells homeostasis including generation, expansion and suppressor functions. As P-selectin/SELPLG ligand, plays a specialized role in activated but not naive T-cell trafficking during inflammatory responses. Controls thereby T-cell accumulation in the inflamed central nervous system (CNS) and the induction of autoimmune disease. Also regulates expression of various anti-inflammatory cytokines and co-inhibitory ligands including IL10. Acts as a regulator of T-cell proliferation. May play a role in kidney injury and repair. This Mus musculus (Mouse) protein is Hepatitis A virus cellular receptor 1 homolog (Havcr1).